The primary structure comprises 351 residues: Riboflavin-binding protein RibY (351 aa).

The signal sequence occupies residues 1 to 19 (MMKLRVLTLGILIILLITA). C20 carries N-palmitoyl cysteine lipidation. C20 carries S-diacylglycerol cysteine lipidation.

This sequence belongs to the NMT1 family. The complex is likely composed of an ATP-binding protein, a transmembrane protein (RibX) and a solute-binding protein (RibY).

It is found in the cell membrane. Functionally, part of an ABC transporter complex that transports riboflavin into the cell. Binds riboflavin. The polypeptide is Riboflavin-binding protein RibY (Chloroflexus aurantiacus (strain ATCC 29366 / DSM 635 / J-10-fl)).